The chain runs to 522 residues: Lysine--tRNA ligase (522 aa).

The 'HIGH' region motif lies at 44–52; that stretch reads PSGLPHIGT. The 'KMSKS' region motif lies at 290–294; it reads KISKS. An ATP-binding site is contributed by Lys293.

This sequence belongs to the class-I aminoacyl-tRNA synthetase family.

The protein resides in the cytoplasm. It catalyses the reaction tRNA(Lys) + L-lysine + ATP = L-lysyl-tRNA(Lys) + AMP + diphosphate. This is Lysine--tRNA ligase from Rickettsia bellii (strain OSU 85-389).